An 834-amino-acid polypeptide reads, in one-letter code: MQPSSPNATNYLADNIQISSANLSQTEMVVGRDSADYTAMHSINVGVGNSFLRGDTDIPQESGHSFETPSNMSFTAGQWDTESLPPVDTPDALNKAAGRIRSLLRRMDHETVAYEDMQRNLHYAARVLEAVFIDESREGCNGNCKNLNCSRHSHGRDDQQQDNNNSNRSCSLQEASPGGAGAGVTPGADNQDSIESRTKGVSQAPQTHSGPTGPPSNTSSETIAQPAPKLQPALETVRESVMEESPSKDPGDKGPPPPASTSTLTSQTTTSSSATAEPSAKAAESQAGSAGSSGSCSNPAAVHRQRRLRTPTWARSMSTNKTRLADEDDELSEVQPDAVPPEVREWLASTFTRQMATSRRKSDEKPKFRSVAHAIRAGIFVDRMYRRVSSSALTAFPPDVVRLLKNLDDWTFDVFALTEAASGQVVKYVAYELFNRYGSIHKFKIAPGILEAFLHRVEEGYCRYRNPYHNNLHAVDVMQTIHYCLCNTGLMNWLTDLEIFASLLAALLHDYEHTGTTNNFHVMSGSETALLYNDRAVLENHHASASFRLLREDEYNILSHLSREEFRELRGLVIEMVLGTDMTNHFQQMKAMRQLLTLQEATIDKQKVLSLVLHCCDISHPAKQWGVHHRWTMLLLEEFFRQGDLEKELGLPFSPLCDRNNTLVAESQICFIDFIVEPSMGVMSDMLELILAPIAPMNKSKPATLVEHETTANSTTNSAIVIPNSGITPSMDKPRDHRTEAKTTAAECLARKSVTGTTASKFNIPKPWLTCLVENKRIWKEQAVKDAEARALATAAEEAAAAAAAEAEESKPETETADGEQSEPAAEPADGAAA.

The disordered stretch occupies residues 152–338; that stretch reads HSHGRDDQQQ…DELSEVQPDA (187 aa). Residues 207-222 are compositionally biased toward low complexity; it reads THSGPTGPPSNTSSET. Positions 236-252 are enriched in basic and acidic residues; it reads TVRESVMEESPSKDPGD. The span at 260 to 301 shows a compositional bias: low complexity; it reads STSTLTSQTTTSSSATAEPSAKAAESQAGSAGSSGSCSNPAA. A compositionally biased stretch (polar residues) spans 313–322; sequence WARSMSTNKT. Positions 364–387 are calmodulin-binding; that stretch reads EKPKFRSVAHAIRAGIFVDRMYRR. One can recognise a PDEase domain in the interval 392–786; it reads ALTAFPPDVV…RIWKEQAVKD (395 aa). The active-site Proton donor is histidine 469. The Zn(2+) site is built by histidine 473, histidine 509, aspartate 510, and aspartate 617. Aspartate 510 lines the Mg(2+) pocket. 2 disordered regions span residues 720-744 and 797-834; these read IVIPNSGITPSMDKPRDHRTEAKTT and EEAAAAAAAEAEESKPETETADGEQSEPAAEPADGAAA. Positions 732 to 741 are enriched in basic and acidic residues; it reads DKPRDHRTEA. Positions 823 to 834 are enriched in low complexity; the sequence is EPAAEPADGAAA.

This sequence belongs to the cyclic nucleotide phosphodiesterase family. PDE1 subfamily. The cofactor is Zn(2+). Mg(2+) serves as cofactor. As to expression, expressed in the head (at protein level). Expressed in Malpighian tubules. Expressed in neurons in the brain and ventral ganglia with male flies having higher levels of expression in the abdominal ganglia compared to female flies.

The catalysed reaction is a nucleoside 3',5'-cyclic phosphate + H2O = a nucleoside 5'-phosphate + H(+). The enzyme catalyses 3',5'-cyclic GMP + H2O = GMP + H(+). It catalyses the reaction 3',5'-cyclic AMP + H2O = AMP + H(+). Its activity is regulated as follows. Type I PDE are activated by the binding of calmodulin in the presence of Ca(2+). Inhibited by zaprinast and sildenafil. Cyclic nucleotide phosphodiesterase with a dual specificity for the second messengers cAMP and cGMP, which are key regulators of many important physiological processes. Required for male fertility and male mating behavior. The protein is Dual specificity calcium/calmodulin-dependent 3',5'-cyclic nucleotide phosphodiesterase 1 of Drosophila melanogaster (Fruit fly).